The chain runs to 104 residues: Large ribosomal subunit protein uL24 (104 aa).

This sequence belongs to the universal ribosomal protein uL24 family. As to quaternary structure, part of the 50S ribosomal subunit.

In terms of biological role, one of two assembly initiator proteins, it binds directly to the 5'-end of the 23S rRNA, where it nucleates assembly of the 50S subunit. One of the proteins that surrounds the polypeptide exit tunnel on the outside of the subunit. This is Large ribosomal subunit protein uL24 from Shewanella oneidensis (strain ATCC 700550 / JCM 31522 / CIP 106686 / LMG 19005 / NCIMB 14063 / MR-1).